Here is a 736-residue protein sequence, read N- to C-terminus: Prolyl 3-hydroxylase 3 (736 aa).

A signal peptide spans 1–20; that stretch reads MLRLLRPLLLLLLLPPPGSP. 3 TPR repeats span residues 37 to 70, 154 to 187, and 216 to 249; these read PDLL…QAAL, REPY…NPMH, and HWAA…SLAQ. A disordered region spans residues 253-275; the sequence is CRADCEGPEEQQGAEEEEDGAAS. Acidic residues predominate over residues 258–272; it reads EGPEEQQGAEEEEDG. The TPR 4 repeat unit spans residues 316-349; the sequence is PNQLRRLHEAHAQVGNLSQAIENVLSVLLFYPED. N-linked (GlcNAc...) asparagine glycans are attached at residues asparagine 331 and asparagine 462. Residues 561-675 form the Fe2OG dioxygenase domain; it reads THLVCRSAIE…RCALALWHTW (115 aa). Fe cation contacts are provided by histidine 584, aspartate 586, and histidine 656. Arginine 666 is an active-site residue. Residues 681-709 are a coiled coil; it reads EQEWIEAKELLQESQEEEEEEEEEMPSKD. The tract at residues 689–736 is disordered; that stretch reads ELLQESQEEEEEEEEEMPSKDPSPEPPSRRHQRVQDKTGRAPRVREEL. Over residues 694 to 704 the composition is skewed to acidic residues; it reads SQEEEEEEEEE. Positions 721 to 736 are enriched in basic and acidic residues; sequence RVQDKTGRAPRVREEL. The Prevents secretion from ER motif lies at 733–736; the sequence is REEL.

Belongs to the leprecan family. In terms of assembly, identified in a complex with PLOD1 and P3H4. Fe cation is required as a cofactor. Requires L-ascorbate as cofactor. As to expression, detected in fetal cartilage (at protein level). Weak expression in heart, lung, ovary and skeletal muscle.

Its subcellular location is the endoplasmic reticulum. It carries out the reaction L-prolyl-[collagen] + 2-oxoglutarate + O2 = trans-3-hydroxy-L-prolyl-[collagen] + succinate + CO2. Part of a complex composed of PLOD1, P3H3 and P3H4 that catalyzes hydroxylation of lysine residues in collagen alpha chains and is required for normal assembly and cross-linkling of collagen fibrils. Required for normal hydroxylation of lysine residues in type I collagen chains in skin, bone, tendon, aorta and cornea. Required for normal skin stability via its role in hydroxylation of lysine residues in collagen alpha chains and in collagen fibril assembly. Apparently not required for normal prolyl 3-hydroxylation on collagen chains, possibly because it functions redundantly with other prolyl 3-hydroxylases. This is Prolyl 3-hydroxylase 3 from Homo sapiens (Human).